The sequence spans 843 residues: MRATEIRKNYQHLWKGGTLLLGMLMICSAAEQLWVTVYYGVPVWKEATTTLFCASDAKAYDTEVHNVWATHACVPTDPNPQEVKLENVTENFNMWKNNMVEQMHEDIISLWDQSLKPCVKLTPLCVTLNCTDLRNATNTTSSSWETMEKGEIKNCSFNITTSIRDKVQKEYALFYNLDVVPIDNASYRLISCNTSVITQACPKVSFEPIPIHYCAPAGFAILKCNDKKFNGTGPCTNVSTVQCTHGIRPVVSTQLLLNGSLAEEEIVIRSENFTNNAKTIIVQLNESVVINCTRPNNNTRKSINIGPGRALYTTGEIIGDIRQAHCNLSKTQWENTLEQIAIKLKEQFGNNKTIIFNPSSGGDPEIVTHSFNCGGEFFYCNSTQLFTWNDTRKLNNTGRNITLPCRIKQIINMWQEVGKAMYAPPIRGQIRCSSNITGLLLTRDGGKDTNGTEIFRPGGGDMRDNWRSELYKYKVVKIEPLGVAPTKAKRRVVQREKRAVGLGALFLGFLGAAGSTMGAASITLTVQARQLLSGIVQQQNNLLRAIEAQQHLLQLTVWGIKQLQARVLAVERYLRDQQLLGIWGCSGKLICTTTVPWNTSWSNKSLNEIWDNMTWMKWEREIDNYTHIIYSLIEQSQNQQEKNEQELLALDKWASLWNWFDITKWLWYIKIFIMIVGGLIGLRIVFVVLSIVNRVRQGYSPLSFQTHLPAQRGPDRPDGIEEEGGERDRDRSGPLVDGFLAIIWVDLRSLCLFSYHRLRDLLLIVTRIVELLGRRGWGVLKYWWNLLQYWIQELKNSAVSLLNATAIAVAEGTDRVIEILQRAFRAVLHIPVRIRQGLERALL.

A signal peptide spans 1-31 (MRATEIRKNYQHLWKGGTLLLGMLMICSAAE). Topologically, residues 32-671 (QLWVTVYYGV…ITKWLWYIKI (640 aa)) are extracellular. Cysteine 53 and cysteine 73 are disulfide-bonded. Asparagine 87, asparagine 129, asparagine 135, asparagine 138, asparagine 154, asparagine 158, asparagine 184, asparagine 193, asparagine 230, asparagine 237, asparagine 258, asparagine 272, asparagine 285, asparagine 291, asparagine 297, asparagine 327, and asparagine 351 each carry an N-linked (GlcNAc...) asparagine; by host glycan. 5 disulfide bridges follow: cysteine 118-cysteine 201, cysteine 125-cysteine 192, cysteine 130-cysteine 155, cysteine 214-cysteine 243, and cysteine 224-cysteine 235. The segment at 130–154 (CTDLRNATNTTSSSWETMEKGEIKN) is V1. The interval 155–192 (CSFNITTSIRDKVQKEYALFYNLDVVPIDNASYRLISC) is V2. Residues 292-325 (CTRPNNNTRKSINIGPGRALYTTGEIIGDIRQAH) form a V3 region. Cysteine 292 and cysteine 326 are disulfide-bonded. The CD4-binding loop stretch occupies residues 359–369 (SSGGDPEIVTH). Cystine bridges form between cysteine 373–cysteine 432 and cysteine 380–cysteine 405. The V4 stretch occupies residues 380 to 405 (CNSTQLFTWNDTRKLNNTGRNITLPC). Residues asparagine 381, asparagine 389, asparagine 395, asparagine 400, asparagine 435, and asparagine 450 are each glycosylated (N-linked (GlcNAc...) asparagine; by host). V5 regions lie at residues 448 to 458 (DTNGTEIFRPG) and 450 to 458 (NGTEIFRPG). A fusion peptide region spans residues 499 to 519 (AVGLGALFLGFLGAAGSTMGA). The tract at residues 561–579 (KQLQARVLAVERYLRDQQL) is immunosuppression. Cysteine 585 and cysteine 591 are oxidised to a cystine. Asparagine 598, asparagine 603, asparagine 612, and asparagine 624 each carry an N-linked (GlcNAc...) asparagine; by host glycan. The stretch at 620-654 (REIDNYTHIIYSLIEQSQNQQEKNEQELLALDKWA) forms a coiled coil. Residues 649 to 670 (ALDKWASLWNWFDITKWLWYIK) form an MPER; binding to GalCer region. The helical transmembrane segment at 672-692 (FIMIVGGLIGLRIVFVVLSIV) threads the bilayer. Topologically, residues 693-843 (NRVRQGYSPL…IRQGLERALL (151 aa)) are cytoplasmic. The short motif at 699–702 (YSPL) is the YXXL motif; contains endocytosis signal element. The segment at 706–731 (THLPAQRGPDRPDGIEEEGGERDRDR) is disordered. A lipid anchor (S-palmitoyl cysteine; by host) is attached at cysteine 751. A Di-leucine internalization motif motif is present at residues 842–843 (LL).

Belongs to the HIV-1 env protein family. In terms of assembly, the mature envelope protein (Env) consists of a homotrimer of non-covalently associated gp120-gp41 heterodimers. The resulting complex protrudes from the virus surface as a spike. There seems to be as few as 10 spikes on the average virion. Interacts with host CD4, CCR5 and CXCR4. Gp120 also interacts with the C-type lectins CD209/DC-SIGN and CLEC4M/DC-SIGNR (collectively referred to as DC-SIGN(R)). Gp120 and gp41 interact with GalCer. Gp120 interacts with host ITGA4/ITGB7 complex; on CD4+ T-cells, this interaction results in rapid activation of integrin ITGAL/LFA-1, which facilitates efficient cell-to-cell spreading of HIV-1. Gp120 interacts with cell-associated heparan sulfate; this interaction increases virus infectivity on permissive cells and may be involved in infection of CD4- cells. The mature envelope protein (Env) consists of a homotrimer of non-covalently associated gp120-gp41 heterodimers. The resulting complex protrudes from the virus surface as a spike. There seems to be as few as 10 spikes on the average virion. Post-translationally, highly glycosylated by host. The high number of glycan on the protein is reffered to as 'glycan shield' because it contributes to hide protein sequence from adaptive immune system. Palmitoylation of the transmembrane protein and of Env polyprotein (prior to its proteolytic cleavage) is essential for their association with host cell membrane lipid rafts. Palmitoylation is therefore required for envelope trafficking to classical lipid rafts, but not for viral replication. In terms of processing, specific enzymatic cleavages in vivo yield mature proteins. Envelope glycoproteins are synthesized as an inactive precursor that is heavily N-glycosylated and processed likely by host cell furin in the Golgi to yield the mature SU and TM proteins. The cleavage site between SU and TM requires the minimal sequence [KR]-X-[KR]-R. About 2 of the 9 disulfide bonds of gp41 are reduced by P4HB/PDI, following binding to CD4 receptor.

The protein localises to the virion membrane. It is found in the host cell membrane. Its subcellular location is the host endosome membrane. Its function is as follows. Oligomerizes in the host endoplasmic reticulum into predominantly trimers. In a second time, gp160 transits in the host Golgi, where glycosylation is completed. The precursor is then proteolytically cleaved in the trans-Golgi and thereby activated by cellular furin or furin-like proteases to produce gp120 and gp41. Attaches the virus to the host lymphoid cell by binding to the primary receptor CD4. This interaction induces a structural rearrangement creating a high affinity binding site for a chemokine coreceptor like CXCR4 and/or CCR5. Acts as a ligand for CD209/DC-SIGN and CLEC4M/DC-SIGNR, which are respectively found on dendritic cells (DCs), and on endothelial cells of liver sinusoids and lymph node sinuses. These interactions allow capture of viral particles at mucosal surfaces by these cells and subsequent transmission to permissive cells. HIV subverts the migration properties of dendritic cells to gain access to CD4+ T-cells in lymph nodes. Virus transmission to permissive T-cells occurs either in trans (without DCs infection, through viral capture and transmission), or in cis (following DCs productive infection, through the usual CD4-gp120 interaction), thereby inducing a robust infection. In trans infection, bound virions remain infectious over days and it is proposed that they are not degraded, but protected in non-lysosomal acidic organelles within the DCs close to the cell membrane thus contributing to the viral infectious potential during DCs' migration from the periphery to the lymphoid tissues. On arrival at lymphoid tissues, intact virions recycle back to DCs' cell surface allowing virus transmission to CD4+ T-cells. In terms of biological role, acts as a class I viral fusion protein. Under the current model, the protein has at least 3 conformational states: pre-fusion native state, pre-hairpin intermediate state, and post-fusion hairpin state. During fusion of viral and target intracellular membranes, the coiled coil regions (heptad repeats) assume a trimer-of-hairpins structure, positioning the fusion peptide in close proximity to the C-terminal region of the ectodomain. The formation of this structure appears to drive apposition and subsequent fusion of viral and target cell membranes. Complete fusion occurs in host cell endosomes and is dynamin-dependent, however some lipid transfer might occur at the plasma membrane. The virus undergoes clathrin-dependent internalization long before endosomal fusion, thus minimizing the surface exposure of conserved viral epitopes during fusion and reducing the efficacy of inhibitors targeting these epitopes. Membranes fusion leads to delivery of the nucleocapsid into the cytoplasm. This Homo sapiens (Human) protein is Envelope glycoprotein gp160.